The following is a 481-amino-acid chain: Aspartyl/glutamyl-tRNA(Asn/Gln) amidotransferase subunit B (481 aa).

The protein belongs to the GatB/GatE family. GatB subfamily. In terms of assembly, heterotrimer of A, B and C subunits.

It catalyses the reaction L-glutamyl-tRNA(Gln) + L-glutamine + ATP + H2O = L-glutaminyl-tRNA(Gln) + L-glutamate + ADP + phosphate + H(+). The catalysed reaction is L-aspartyl-tRNA(Asn) + L-glutamine + ATP + H2O = L-asparaginyl-tRNA(Asn) + L-glutamate + ADP + phosphate + 2 H(+). Allows the formation of correctly charged Asn-tRNA(Asn) or Gln-tRNA(Gln) through the transamidation of misacylated Asp-tRNA(Asn) or Glu-tRNA(Gln) in organisms which lack either or both of asparaginyl-tRNA or glutaminyl-tRNA synthetases. The reaction takes place in the presence of glutamine and ATP through an activated phospho-Asp-tRNA(Asn) or phospho-Glu-tRNA(Gln). This is Aspartyl/glutamyl-tRNA(Asn/Gln) amidotransferase subunit B from Pseudomonas aeruginosa (strain LESB58).